We begin with the raw amino-acid sequence, 138 residues long: Small ribosomal subunit protein uS11c (138 aa).

Positions 1-24 (MAKPIPKVGSRRNGRSSARKSARR) are disordered. Over residues 9–24 (GSRRNGRSSARKSARR) the composition is skewed to basic residues.

It belongs to the universal ribosomal protein uS11 family. In terms of assembly, part of the 30S ribosomal subunit.

It localises to the plastid. It is found in the chloroplast. This is Small ribosomal subunit protein uS11c from Gossypium hirsutum (Upland cotton).